We begin with the raw amino-acid sequence, 166 residues long: Phosphopantetheine adenylyltransferase (166 aa).

Threonine 11 serves as a coordination point for substrate. Residues 11–12 and histidine 19 each bind ATP; that span reads TF. Residues lysine 43, threonine 79, and arginine 93 each coordinate substrate. ATP contacts are provided by residues glutamate 104 and 128–134; that span reads LEPLNST.

The protein belongs to the bacterial CoaD family. Homohexamer. It depends on Mg(2+) as a cofactor.

It is found in the cytoplasm. It carries out the reaction (R)-4'-phosphopantetheine + ATP + H(+) = 3'-dephospho-CoA + diphosphate. It participates in cofactor biosynthesis; coenzyme A biosynthesis; CoA from (R)-pantothenate: step 4/5. Functionally, reversibly transfers an adenylyl group from ATP to 4'-phosphopantetheine, yielding dephospho-CoA (dPCoA) and pyrophosphate. This chain is Phosphopantetheine adenylyltransferase, found in Lactococcus lactis subsp. cremoris (strain MG1363).